The following is a 254-amino-acid chain: Putative cysteine-rich repeat secretory protein 37 (254 aa).

The N-terminal stretch at 1 to 29 (MYSSYSLSKRLVSIPILAIQLLLIRSVSS) is a signal peptide. 2 Gnk2-homologous domains span residues 36–138 (YLNH…SIRS) and 145–251 (YRNV…LYPF).

It belongs to the cysteine-rich repeat secretory protein family.

It is found in the secreted. The polypeptide is Putative cysteine-rich repeat secretory protein 37 (CRRSP37) (Arabidopsis thaliana (Mouse-ear cress)).